A 69-amino-acid polypeptide reads, in one-letter code: Protein hunchback (69 aa).

C2H2-type zinc fingers lie at residues lysine 1–histidine 11, phenylalanine 17–histidine 39, and tyrosine 45–histidine 69.

The protein belongs to the hunchback C2H2-type zinc-finger protein family.

It is found in the nucleus. Functionally, gap class segmentation protein that controls development of head structures. The chain is Protein hunchback (hb) from Apis mellifera (Honeybee).